The sequence spans 675 residues: MAEPALLPAAQMERLAPGPLASPCPRIPRARIARRCAQRWADLGCSSGPSSGRMDQLPQKNLLRLHPAGSAGCSTGVESSSMDGFWMEVEQIQQRDELREEDSGGNEGQLPEEGEAESQWLQDTGLSGLLGGLGLDGDHQELLSTLTQTQVAAVCRRLDIYARSVRRQHKTPVRDVRDVFGVFNSGKMSSENGDSGMKGAQLSSGASKFPPAAEPGGLQEQAGREEAFNMDSAYSEQAAVLLQRSRPSRGGTSAWGKCSLPKFTVPKGRLGVTRIGDLSLQDMRKVPSLALIELTALCDILGLDLKRSKAGKWKAAETRLFGVPLDSLLEADHKVLPSTQVPLVLQALLSCLEKRGLDMEGILRVPGSQARVKGLEQKLERDFYAGLFSWDEVHHNDASDLLKRFIRKLPTPLLTAEYLPAFAVVPNIPNLKQRLQVLHLLILILPEPNRNALKALLEFLRKVVAREQHNKMTLRNVSTVMAPNLFLHQGRPPKLPKGKEKQLAEGAAEVVQIMVHYQDLLWTVASFLVAQVRKLNDSSSRRPQLCDAGLKTWLRRMHADRDKAGDGLEATPKVAKIQVVWPIKDPLKVPLTPSTKVAHVLRQFTEHLSPGSKGQEDSEDMDSLLLHHRSMESANILLYEVGGNINEHRLDPDAYLLDLYRANPHGEWVLKQNPT.

Disordered regions lie at residues 95–118 (RDELREEDSGGNEGQLPEEGEAES) and 187–218 (KMSSENGDSGMKGAQLSSGASKFPPAAEPGGL). A compositionally biased stretch (acidic residues) spans 103 to 116 (SGGNEGQLPEEGEA). The Rho-GAP domain maps to 323-522 (VPLDSLLEAD…IMVHYQDLLW (200 aa)).

Its function is as follows. GTPase activator for the Rho-type GTPases by converting them to an inactive GDP-bound state. The chain is Rho GTPase-activating protein 40 from Homo sapiens (Human).